We begin with the raw amino-acid sequence, 216 residues long: Nicotinamidase (216 aa).

Asp8 is an active-site residue. Residues Asp51, His53, and His94 each contribute to the Zn(2+) site. Lys122 is an active-site residue. Catalysis depends on Cys167, which acts as the Nucleophile.

The protein belongs to the isochorismatase family.

It localises to the cytoplasm. The protein localises to the nucleus. The protein resides in the peroxisome. The catalysed reaction is nicotinamide + H2O = nicotinate + NH4(+). It functions in the pathway cofactor biosynthesis; nicotinate biosynthesis; nicotinate from nicotinamide: step 1/1. Inhibited by N-ethylmaleimide, HgCl(2) and PCMB. Competitively inhibited by NAD, NMN and 3-acetylpyridine. In terms of biological role, catalyzes the deamidation of nicotinamide, an early step in the NAD(+) salvage pathway. Positively regulates SIR2-mediated silencing and longevity by preventing the accumulation of intracellular nicotinamide, an inhibitor of SIR2, during times of stress. Also acts on nicotinyl hydroxamate. This is Nicotinamidase (PNC1) from Saccharomyces cerevisiae (strain ATCC 204508 / S288c) (Baker's yeast).